A 79-amino-acid polypeptide reads, in one-letter code: Hematopoietic cell signal transducer (79 aa).

The N-terminal stretch at 1 to 18 (MIHPGHILFLLLLPVAAA) is a signal peptide. The Extracellular segment spans residues 19-34 (QTTPGSCSGCGSLSLP). Residues 35–55 (LLAGLVAADAVASPLIVGAVF) form a helical membrane-spanning segment. The Cytoplasmic segment spans residues 56–79 (LCARPRRSPAQGDGKVYINMPGRG). Tyr-72 is modified (phosphotyrosine). The tract at residues 72–74 (YIN) is GRB2 binding site. The interval 72–75 (YINM) is PIK3R1 binding site.

The protein belongs to the DAP10 family. Homodimer; Disulfide-linked. Heterohexamer composed of four subunits of HCST/DAP10 and two subunits of KLRK1. Interacts (via transmembrane domain) with KLRK1 (via transmembrane domain); the interaction is required for KLRK1 NK cell surface and induces NK cell-mediated cytotoxicity. Interacts with PIK3R1 and GRB2. Interacts with CLEC5A. Forms an CLEC5A/TYROBP/HCST trimolecular complex depending almost solely on TYROBP. Interacts with CD300H. In terms of processing, phosphorylated; PIK3R1 and GRB2 associate specifically with tyrosine-phosphorylated HCST. Post-translationally, O-glycosylated.

It localises to the membrane. Its function is as follows. Transmembrane adapter protein which associates with KLRK1 to form an activation receptor KLRK1-HCST in lymphoid and myeloid cells; this receptor plays a major role in triggering cytotoxicity against target cells expressing cell surface ligands such as MHC class I chain-related MICA and MICB, and UL16-binding proteins (ULBPs); these ligands are up-regulated by stress conditions and pathological state such as viral infection and tumor transformation. Functions as a docking site for PI3-kinase PIK3R1 and GRB2. Interaction of ULBPs with KLRK1-HCST triggers calcium mobilization and activation of the PIK3R1, MAP2K/ERK, and JAK2/STAT5 signaling pathways. Both PIK3R1 and GRB2 are required for full KLRK1-HCST-mediated activation and ultimate killing of target cells. In NK cells, KLRK1-HCST signaling directly induces cytotoxicity and enhances cytokine production initiated via DAP12/TYROBP-associated receptors. In T-cells, it provides primarily costimulation for TCR-induced signals. KLRK1-HCST receptor plays a role in immune surveillance against tumors and is required for cytolysis of tumors cells; indeed, melanoma cells that do not express KLRK1 ligands escape from immune surveillance mediated by NK cells. The polypeptide is Hematopoietic cell signal transducer (HCST) (Macaca mulatta (Rhesus macaque)).